The primary structure comprises 209 residues: MSLLLQHQFKPLPADKQIDTCSFLDSVSHLPAFFDCLGSAIFSPIKADITGNITKIRSVYESNPTKFKTLQMILEGEKELHGPQWPKVGATLALMWLKRGLKFIQVMLQSIADGERDDQNPNLIKVNITKAYEIALQKYHGWLVQKLFQTALFAAPYKDVFLKALSKGQTVKEEECIEKIRQFLVNYTTTIEAIYIMYNKMNAELDYKA.

2 tandem repeats follow at residues 45-55 (IKADITGNITK) and 56-66 (IRSVYESNPTK). Positions 45–66 (IKADITGNITKIRSVYESNPTK) are 2 X 12 AA approximate tandem repeats. 48-55 (DITGNITK) contacts beta-D-galactosyl-(1-&gt;4)-beta-D-glucosyl-(1&lt;-&gt;1)-N-[(9Z)-octadecenoyl]-sphing-4-enine. Beta-D-galactosyl-(1-&gt;4)-beta-D-glucosyl-(1&lt;-&gt;1)-N-[(9Z)-octadecenoyl]-sphing-4-enine contacts are provided by His-140 and Tyr-207.

Belongs to the GLTP family.

It is found in the cytoplasm. Accelerates the intermembrane transfer of various glycolipids. Catalyzes the transfer of various glycosphingolipids between membranes but does not catalyze the transfer of phospholipids. May be involved in the intracellular translocation of glucosylceramides. This chain is Glycolipid transfer protein A (gltp-a), found in Xenopus laevis (African clawed frog).